Consider the following 772-residue polypeptide: Endoplasmic reticulum membrane sensor NFE2L1 (772 aa).

Residues 7–24 (YLTEGLLQFTILLSLIGV) form a helical; Signal-anchor for type II membrane protein membrane-spanning segment. The segment at 108–148 (DPEGSVSGSQPNSGLALESSSGLQDVTGPDNGVRESETEQG) is disordered. The segment covering 113-131 (VSGSQPNSGLALESSSGLQ) has biased composition (polar residues). The tract at residues 191–199 (VFDYSHRQK) is cholesterol recognition/amino acid consensus (CRAC) region. An N-linked (GlcNAc...) asparagine glycan is attached at Asn-348. The segment at 379-383 (SPEVE) is CPD. 2 N-linked (GlcNAc...) asparagine glycosylation sites follow: Asn-412 and Asn-423. Positions 470–532 (EEEFDSDSGL…AVGYSSDSET (63 aa)) are disordered. The Destruction motif motif lies at 476-480 (DSGLS). The segment covering 476 to 523 (DSGLSLDSSHSPSSLSSSEGSSSSSSSSSSSSSSASSSASSSFSEEGA) has biased composition (low complexity). Ser-528 is subject to Phosphoserine; by CK2. Ser-599 is modified (phosphoserine; by PKA). In terms of domain architecture, bZIP spans 654–717 (LIRDIRRRGK…RQMKQKVQSL (64 aa)). Residues 656–675 (RDIRRRGKNKMAAQNCRKRK) are basic motif. The leucine-zipper stretch occupies residues 682 to 696 (LERDVEDLQRDKARL). Residues 753 to 772 (RTMADQQARRQERKPKDRRK) form a disordered region. The Nuclear localization signal motif lies at 761 to 768 (RRQERKPK). The span at 763–772 (QERKPKDRRK) shows a compositional bias: basic residues.

It belongs to the bZIP family. CNC subfamily. In terms of assembly, interacts with KEAP1. Interacts (via CPD region) with FBXW7; leading to its ubiquitination and degradation. Interacts with SYVN1/HRD1; leading to its ubiquitination and degradation. Interacts (when ubiquitinated) with DDI2; leading to its cleavage. As to quaternary structure, interacts (via the bZIP domain) with small MAF protein (MAFF, MAFG or MAFK); required for binding to antioxidant response elements (AREs) on DNA. Interacts (via Destruction motif) with BTRC; leading to its ubiquitination and degradation. Interacts with CEBPB; the heterodimer represses expression of DSPP during odontoblast differentiation. Interacts with MOTS-c, a peptide produced by the mitochondrially encoded 12S rRNA MT-RNR1. Post-translationally, cleaved at Leu-104 by the aspartyl protease DDI2 following retrotranslocation, releasing the protein from the endoplasmic reticulum membrane and forming the transcription factor NRF1 that translocates into the nucleus. Ubiquitination is prerequisite for cleavage by aspartyl protease DDI2. In terms of processing, N-glycosylated in normal conditions, when it has a single-pass type II membrane protein topology, with the DNA-binding domain facing the endoplasmic reticulum lumen. Deglycosylated during retrotranslocation to the cytosolic side of the membrane, to have a single-pass type III membrane protein topology with the major part of the protein facing the cytosol. Ubiquitinated by the SCF(FBXW7) complex and SYVN1/HRD1, leading to its degradation by the proteasome. Ubiquitinated during retrotranslocation to the cytosolic side of the membrane: ubiquitination does not lead to degradation and is required for processing by the aspartyl protease DDI2 and subsequent release from the endoplasmic reticulum membrane. Post-translationally, phosphorylation by CK2 at Ser-528 inhibits transcription factor activity, possibly by affecting DNA-binding activity. Phosphorylation at Ser-599 is required for interaction with CEBPB. In terms of processing, ubiquitinated by the SCF(BTRC) complex in the nucleus, leading to its degradation by the proteasome.

It is found in the endoplasmic reticulum membrane. The protein resides in the nucleus. Functionally, endoplasmic reticulum membrane sensor that translocates into the nucleus in response to various stresses to act as a transcription factor. Constitutes a precursor of the transcription factor NRF1. Able to detect various cellular stresses, such as cholesterol excess, oxidative stress or proteasome inhibition. In response to stress, it is released from the endoplasmic reticulum membrane following cleavage by the protease DDI2 and translocates into the nucleus to form the transcription factor NRF1. Acts as a key sensor of cholesterol excess: in excess cholesterol conditions, the endoplasmic reticulum membrane form of the protein directly binds cholesterol via its CRAC motif, preventing cleavage and release of the transcription factor NRF1, thereby allowing expression of genes promoting cholesterol removal, such as CD36. Involved in proteasome homeostasis: in response to proteasome inhibition, it is released from the endoplasmic reticulum membrane, translocates to the nucleus and activates expression of genes encoding proteasome subunits. In terms of biological role, CNC-type bZIP family transcription factor that translocates to the nucleus and regulates expression of target genes in response to various stresses. Heterodimerizes with small-Maf proteins (MAFF, MAFG or MAFK) and binds DNA motifs including the antioxidant response elements (AREs), which regulate expression of genes involved in oxidative stress response. Activates or represses expression of target genes, depending on the context. Plays a key role in cholesterol homeostasis by acting as a sensor of cholesterol excess: in low cholesterol conditions, translocates into the nucleus and represses expression of genes involved in defense against cholesterol excess, such as CD36. In excess cholesterol conditions, the endoplasmic reticulum membrane form of the protein directly binds cholesterol via its CRAC motif, preventing cleavage and release of the transcription factor NRF1, thereby allowing expression of genes promoting cholesterol removal. Critical for redox balance in response to oxidative stress: acts by binding the AREs motifs on promoters and mediating activation of oxidative stress response genes, such as GCLC, GCLM, GSS, MT1 and MT2. Plays an essential role during fetal liver hematopoiesis: probably has a protective function against oxidative stress and is involved in lipid homeostasis in the liver. Involved in proteasome homeostasis: in response to proteasome inhibition, mediates the 'bounce-back' of proteasome subunits by translocating into the nucleus and activating expression of genes encoding proteasome subunits. Also involved in regulating glucose flux. Together with CEBPB; represses expression of DSPP during odontoblast differentiation. In response to ascorbic acid induction, activates expression of SP7/Osterix in osteoblasts. This chain is Endoplasmic reticulum membrane sensor NFE2L1, found in Pongo abelii (Sumatran orangutan).